Reading from the N-terminus, the 486-residue chain is Glutamyl-tRNA(Gln) amidotransferase subunit A (486 aa).

Active-site charge relay system residues include lysine 79 and serine 154. Serine 178 serves as the catalytic Acyl-ester intermediate.

This sequence belongs to the amidase family. GatA subfamily. Heterotrimer of A, B and C subunits.

It carries out the reaction L-glutamyl-tRNA(Gln) + L-glutamine + ATP + H2O = L-glutaminyl-tRNA(Gln) + L-glutamate + ADP + phosphate + H(+). Allows the formation of correctly charged Gln-tRNA(Gln) through the transamidation of misacylated Glu-tRNA(Gln) in organisms which lack glutaminyl-tRNA synthetase. The reaction takes place in the presence of glutamine and ATP through an activated gamma-phospho-Glu-tRNA(Gln). This chain is Glutamyl-tRNA(Gln) amidotransferase subunit A, found in Dehalococcoides mccartyi (strain ATCC BAA-2100 / JCM 16839 / KCTC 5957 / BAV1).